Consider the following 130-residue polypeptide: Small ribosomal subunit protein uS11 (130 aa).

The protein belongs to the universal ribosomal protein uS11 family. Part of the 30S ribosomal subunit. Interacts with proteins S7 and S18. Binds to IF-3.

In terms of biological role, located on the platform of the 30S subunit, it bridges several disparate RNA helices of the 16S rRNA. Forms part of the Shine-Dalgarno cleft in the 70S ribosome. The polypeptide is Small ribosomal subunit protein uS11 (Prochlorococcus marinus (strain MIT 9312)).